Reading from the N-terminus, the 2024-residue chain is Pericentriolar material 1 protein (2024 aa).

A disordered region spans residues 1 to 92 (MATGGGPFED…FPHSRYMSQM (92 aa)). Alanine 2 carries the post-translational modification N-acetylalanine. A mediates interaction with DZIP1 region spans residues 2–1460 (ATGGGPFEDG…TWIASNSELT (1459 aa)). Positions 43 to 61 (RSSEKNKKKFGVESDKRVT) are enriched in basic and acidic residues. Residues serine 65, serine 68, serine 69, serine 93, serine 110, serine 116, and serine 119 each carry the phosphoserine modification. The disordered stretch occupies residues 111–163 (DLDQRSIGSDSQGRATAANNKRQLSENRKPFNFLPMQINTNKSKDASTNPPNR). Composition is skewed to polar residues over residues 116–132 (SIGSDSQGRATAANNKR) and 147–163 (QINTNKSKDASTNPPNR). Position 159 is a phosphoserine; in variant Ser-159 (asparagine 159). Positions 218–301 (KASSMREDLV…QLRALQGRQA (84 aa)) form a coiled coil. The interval 354–392 (RDSQPPAVPDNRRQAESLSLTREVSQSRKPSASERLPDE) is disordered. Positions 369 to 383 (ESLSLTREVSQSRKP) are enriched in polar residues. Serine 370 carries the phosphoserine modification. Serine 372 is subject to Phosphoserine; by PLK4. At serine 384 the chain carries Phosphoserine. An N6-acetyllysine modification is found at lysine 399. Positions 400–424 (MRVLQEKKQKMDKLLGELHTLRDQH) form a coiled coil. 2 disordered regions span residues 421–492 (RDQH…KLQK) and 523–548 (ENRKDEETEESEYDSEHENSEPVTNI). 2 stretches are compositionally biased toward polar residues: residues 425–445 (LNNSSSSPQRSVDQRSTSAPS) and 456–477 (GESNSLTSSVPYPTASLVSQNE). Residues 487–543 (SEKLQKLNEVRKRLNELRELVHYYEQTSDMMTDAVNENRKDEETEESEYDSEHENSE) are a coiled coil. Serine 588 carries the post-translational modification Phosphoserine. Disordered regions lie at residues 614 to 652 (HVAQGEDDEEEEEEAEEEGVSGASLSSHRSSLVDEHPED) and 699 to 726 (FYPAEEDTKQNSNNTRGNANKTQKDTGV). Residues 618-632 (GEDDEEEEEEAEEEG) show a composition bias toward acidic residues. Low complexity predominate over residues 634-643 (SGASLSSHRS). Position 643 is a phosphoserine (serine 643). Residues 651 to 682 (EDAEFEQKINRLMAAKQKLRQLQDLVAMVQDD) are a coiled coil. Polar residues predominate over residues 708–719 (QNSNNTRGNANK). Coiled coils occupy residues 726–769 (VNEK…LQTA) and 824–858 (SEMRRHEMLREELRQRRKQLEALMAEHQRRQGLAE). The residue at position 859 (threonine 859) is a Phosphothreonine. Phosphoserine occurs at positions 861, 866, 869, and 872. A Phosphothreonine modification is found at threonine 877. The disordered stretch occupies residues 915-947 (TDEEEEEEQDASSNDNFSVCPSNSVNHNSYNGK). The segment covering 925–946 (ASSNDNFSVCPSNSVNHNSYNG) has biased composition (polar residues). Residues serine 960, serine 977, serine 988, and serine 991 each carry the phosphoserine modification. The stretch at 1063-1089 (TQLTWQQNNVQRLKQMLNELMRQQNQH) forms a coiled coil. 2 disordered regions span residues 1085–1109 (QQNQHPEKPGGKERGSSASHPPSPS) and 1152–1211 (FSQN…RTPW). Positions 1089-1099 (HPEKPGGKERG) are enriched in basic and acidic residues. The segment covering 1152 to 1173 (FSQNISTPSEQQQPLAQNSSGK) has biased composition (polar residues). Serine 1185 and serine 1188 each carry phosphoserine. The segment covering 1192–1201 (EKPRNKKLPE) has biased composition (basic and acidic residues). Serine 1229 and serine 1231 each carry phosphoserine. Positions 1232 to 1246 (VEKSTSSNRKNQLDT) are enriched in polar residues. Positions 1232–1342 (VEKSTSSNRK…RHSAQTEEPV (111 aa)) are disordered. 4 positions are modified to phosphoserine: serine 1257, serine 1260, serine 1262, and serine 1263. Positions 1279–1799 (TRKASAQASL…TQALTNYGSG (521 aa)) are interaction with HAP1. A compositionally biased stretch (basic residues) spans 1296–1313 (KSKSKKRNSTQLKSRVKN). Phosphoserine occurs at positions 1318 and 1320. Position 1468 is a phosphothreonine (threonine 1468). The stretch at 1515 to 1539 (IHLDQALARMREYERMKTEAESNSN) forms a coiled coil. 7 positions are modified to phosphoserine: serine 1573, serine 1697, serine 1730, serine 1765, serine 1768, serine 1776, and serine 1782. Disordered regions lie at residues 1725–1868 (LEDH…NNCP) and 1880–1944 (EQPL…PVLV). Residues 1768–1777 (SDQEEDEESE) are compositionally biased toward acidic residues. Residues 1783–1797 (INLSKAETQALTNYG) are compositionally biased toward polar residues. Over residues 1799 to 1815 (GEDENEDEEMEEFEEGP) the composition is skewed to acidic residues. Polar residues predominate over residues 1818–1827 (VQTSLQANTE). Residues 1835–1860 (DEQVLQRDFKKTAESKNVPLEREATS) show a composition bias toward basic and acidic residues. Low complexity predominate over residues 1905–1916 (PLRLPEMEPLVP). The tract at residues 1913 to 2024 (PLVPRVKEVK…EPETVGAQSI (112 aa)) is interaction with BBS4. Positions 1924 to 1933 (AQETPESSLA) are enriched in polar residues. Phosphoserine occurs at positions 1958 and 1977. Residues 2005–2024 (ELAGNSETLKEPETVGAQSI) are disordered.

The protein belongs to the PCM1 family. In terms of assembly, self-associates. Interacts with C2CD3. Interacts with BBS4, BBS8, CETN3, HAP1, NDE1, NDEL1, MAP1LC3B, GABARAPAL2, and GABARAP. Interacts with CEP131; the interaction increases in response to ultraviolet light (UV) radiation. Associates with microtubule; association to microtubule is reduced in response to cellular stress, such as ultraviolet light (UV) radiation or heat shock, in a process that requires p38 MAP kinase signaling. Interacts with CFAP263. Interacts with SSX2IP. Interacts with CCDC13. Interacts with CEP290. Interacts with PARD6A. Interacts with KIAA0753/OFIP, CEP20/FOR20 and OFD1; the interaction with CEP20/FOR20 and OFD1 may be mediated by KIAA0753/OFIP. Interacts with CCDC66. Interacts with CCDC61. Interacts with DZIP1; localizes DZIP1 and the associated BBSome to centriolar satellite. Interacts with CSTPP1, TTLL1, TPGS1 and LRRC49. Interacts with CFAP53. Post-translationally, ubiquitinated. Undergoes monoubiquitination catalyzed by the E3 ubiquitin-protein ligase MIB1 in proliferating cells, preventing cilia formation. Monoubiquitination by MIB1 is inhibited in response to cellular stress, such as ultraviolet light (UV) radiation or heat shock, resulting in cilia formation initiation. In terms of processing, variant Ser-159 is phosphorylated. Phosphorylated on multiple serine and threonine residues by DYRK3 during the G2-to-M transition, after the nuclear-envelope breakdown. Phosphorylation by DYRK3 promotes disassembly of pericentriolar material. Phosphorylation at Ser-372 mediated by PLK4 is required to maintain the integrity of centriolar satellites. In terms of tissue distribution, expressed in blood, bone marrow, breast, lymph node, ovary and thyroid.

The protein localises to the cytoplasm. Its subcellular location is the cytoskeleton. The protein resides in the microtubule organizing center. It localises to the centrosome. It is found in the cytoplasmic granule. The protein localises to the centriolar satellite. Its subcellular location is the cilium basal body. Required for centrosome assembly and function. Essential for the correct localization of several centrosomal proteins including CEP250, CETN3, PCNT and NEK2. Required to anchor microtubules to the centrosome. Also involved in cilium biogenesis by recruiting the BBSome, a ciliary protein complex involved in cilium biogenesis, to the centriolar satellites. Recruits the tubulin polyglutamylase complex (TPGC) to centriolar satellites. The chain is Pericentriolar material 1 protein from Homo sapiens (Human).